We begin with the raw amino-acid sequence, 303 residues long: Sulfotransferase 6B1 (303 aa).

65–70 provides a ligand contact to 3'-phosphoadenylyl sulfate; sequence KCGSNW. His118 serves as the catalytic Proton acceptor. 3'-phosphoadenylyl sulfate-binding positions include Arg140, Ser148, Tyr203, 237 to 242, and 259 to 261; these read STFQAM and RKG.

It belongs to the sulfotransferase 1 family. Specifically expressed in kidney and testis.

It localises to the cytoplasm. It is found in the cytosol. It catalyses the reaction thyroxine + 3'-phosphoadenylyl sulfate = thyroxine sulfate + adenosine 3',5'-bisphosphate + H(+). In terms of biological role, sulfotransferase that utilizes 3'-phospho-5'-adenylyl sulfate (PAPS) as sulfonate donor to catalyze the sulfate conjugation of thyroxine. Involved in the metabolism of thyroxine. The sequence is that of Sulfotransferase 6B1 (SULT6B1) from Homo sapiens (Human).